Consider the following 107-residue polypeptide: Small ribosomal subunit protein eS25 (107 aa).

A disordered region spans residues 1–35 (MPPKQQLSKAAKAAAAMAGGKKSKKKWSKKSHKDK). Low complexity predominate over residues 8–20 (SKAAKAAAAMAGG). Positions 21 to 35 (KKSKKKWSKKSHKDK) are enriched in basic residues.

The protein belongs to the eukaryotic ribosomal protein eS25 family.

The polypeptide is Small ribosomal subunit protein eS25 (RPS25) (Candida glabrata (strain ATCC 2001 / BCRC 20586 / JCM 3761 / NBRC 0622 / NRRL Y-65 / CBS 138) (Yeast)).